A 57-amino-acid polypeptide reads, in one-letter code: Small polypeptide DEVIL 20 (57 aa).

The N-linked (GlcNAc...) asparagine glycan is linked to Asn5. Residues 16–47 (TFKAKCSHMVRKQRAKFYILGRCLAMLVCGRG) are required for DVL/RTFL small polypeptide activity. The helical transmembrane segment at 29–45 (RAKFYILGRCLAMLVCG) threads the bilayer.

The protein belongs to the DVL/RTFL small polypeptides family.

It is found in the cell membrane. In terms of biological role, small polypeptide acting as a regulatory molecule which coordinates cellular responses required for differentiation, growth and development, probably by restricting polar cell proliferation in lateral organs and coordinating socket cell recruitment and differentiation at trichome sites. This Arabidopsis thaliana (Mouse-ear cress) protein is Small polypeptide DEVIL 20.